A 485-amino-acid polypeptide reads, in one-letter code: UBX domain-containing protein 11 (485 aa).

Residues 1 to 26 (MSSPLASLSKTRKVPLESEPVNPGRR) form a disordered region. A coiled-coil region spans residues 67 to 143 (HDSELLTSMA…VGEMERFLND (77 aa)). The region spanning 224-288 (LEPIPLKLYR…VSDLRNQVYP (65 aa)) is the SEP domain. A UBX domain is found at 386–463 (PVPPLSMLRI…GLVPNATLLL (78 aa)). A phosphoserine mark is found at Ser479 and Ser483.

Interacts with GNA12, GNA13, RND1, RND2 and RND3. Strongly expressed in testis. Also expressed in lung, brain and thymus.

The protein resides in the cytoplasm. Its subcellular location is the cytoskeleton. Functionally, may be involved in the reorganization of actin cytoskeleton mediated by RND1, RND2 and RND3. Promotes RHOA activation mediated by GNA12 and GNA13. The polypeptide is UBX domain-containing protein 11 (Ubxn11) (Rattus norvegicus (Rat)).